Reading from the N-terminus, the 324-residue chain is Olfactory receptor 8U3 (324 aa).

The Extracellular segment spans residues 1–25 (MAEVNIIYVTVFILKGITNRPELQA). Residues 26-46 (PCFGVFLVIYLVTVLGNLGLI) form a helical membrane-spanning segment. The Cytoplasmic portion of the chain corresponds to 47 to 54 (TLIKIDTR). A helical transmembrane segment spans residues 55–75 (LHTPMYYFLSHLAFVDLCYSS). Residues 76–99 (AITPKMMVNFVVERNTIPFHACAT) lie on the Extracellular side of the membrane. A disulfide bridge links Cys-97 with Cys-189. Residues 100–120 (QLGCFLTFMITECFLLASMAY) form a helical membrane-spanning segment. At 121–139 (DCYVAICSPLHYSTLMSRR) the chain is on the cytoplasmic side. A helical membrane pass occupies residues 140-160 (VCIQLVAVPYIYSFLVALFHT). The Extracellular portion of the chain corresponds to 161–196 (VITFRLTYCGPNLINHFYCDDLPFLALSCSDTHMKE). A helical membrane pass occupies residues 197 to 217 (ILIFAFAGFDMISSSSIVLTS). Over 218–237 (YIFIIAAILRIRSTQGQHKA) the chain is Cytoplasmic. Residues 238-258 (ISTCGSHMVTVTIFYGTLIFM) form a helical membrane-spanning segment. Residues 259-271 (YLQPKSNHSLDTD) are Extracellular-facing. A glycan (N-linked (GlcNAc...) asparagine) is linked at Asn-265. Residues 272 to 292 (KMASVFYTVVIPMLNPLIYSL) traverse the membrane as a helical segment. The Cytoplasmic portion of the chain corresponds to 293–324 (RNKEVKDASKKALDKGCENLQILTFLKIRKLY).

Belongs to the G-protein coupled receptor 1 family.

The protein resides in the cell membrane. Functionally, odorant receptor. This chain is Olfactory receptor 8U3, found in Homo sapiens (Human).